The chain runs to 302 residues: Bifunctional protein FolD (302 aa).

Residues 165-167 (GRS), Ser-190, and Ile-231 contribute to the NADP(+) site.

It belongs to the tetrahydrofolate dehydrogenase/cyclohydrolase family. In terms of assembly, homodimer.

It carries out the reaction (6R)-5,10-methylene-5,6,7,8-tetrahydrofolate + NADP(+) = (6R)-5,10-methenyltetrahydrofolate + NADPH. It catalyses the reaction (6R)-5,10-methenyltetrahydrofolate + H2O = (6R)-10-formyltetrahydrofolate + H(+). It functions in the pathway one-carbon metabolism; tetrahydrofolate interconversion. Catalyzes the oxidation of 5,10-methylenetetrahydrofolate to 5,10-methenyltetrahydrofolate and then the hydrolysis of 5,10-methenyltetrahydrofolate to 10-formyltetrahydrofolate. This is Bifunctional protein FolD from Prochlorococcus marinus (strain MIT 9303).